Reading from the N-terminus, the 122-residue chain is Big defensin (122 aa).

The first 28 residues, Met-1–Ser-28, serve as a signal peptide directing secretion. A propeptide spanning residues Glu-29–Ser-34 is cleaved from the precursor. Intrachain disulfides connect Cys-88–Cys-119, Cys-95–Cys-114, and Cys-99–Cys-120.

This sequence belongs to the big defensin family. In terms of tissue distribution, expressed in hemocytes.

It localises to the secreted. Its function is as follows. Significantly inhibits the growth of Gram-negative and Gram-positive bacteria and fungi in vitro. In Argopecten irradians (Bay scallop), this protein is Big defensin.